A 195-amino-acid chain; its full sequence is HTH-type transcriptional regulator BetI (195 aa).

The region spanning 8–68 (SIRRRQLIDA…ATMRDITSQL (61 aa)) is the HTH tetR-type domain. The H-T-H motif DNA-binding region spans 31–50 (TIAQIARRAGVSTGIISHYF).

Its pathway is amine and polyamine biosynthesis; betaine biosynthesis via choline pathway [regulation]. Its function is as follows. Repressor involved in the biosynthesis of the osmoprotectant glycine betaine. It represses transcription of the choline transporter BetT and the genes of BetAB involved in the synthesis of glycine betaine. This Escherichia coli O127:H6 (strain E2348/69 / EPEC) protein is HTH-type transcriptional regulator BetI.